The following is a 562-amino-acid chain: Arginine--tRNA ligase (562 aa).

A 'HIGH' region motif is present at residues 129-139 (ANPTGPLHVGH).

Belongs to the class-I aminoacyl-tRNA synthetase family. As to quaternary structure, monomer.

The protein resides in the cytoplasm. It catalyses the reaction tRNA(Arg) + L-arginine + ATP = L-arginyl-tRNA(Arg) + AMP + diphosphate. This chain is Arginine--tRNA ligase, found in Xanthomonas axonopodis pv. citri (strain 306).